Reading from the N-terminus, the 238-residue chain is DNA repair protein RecO (238 aa).

The protein belongs to the RecO family.

In terms of biological role, involved in DNA repair and RecF pathway recombination. This chain is DNA repair protein RecO, found in Aliivibrio fischeri (strain ATCC 700601 / ES114) (Vibrio fischeri).